The primary structure comprises 3096 residues: Unconventional myosin-XVB (3096 aa).

Disordered stretches follow at residues 1 to 330 (MGRN…GPED), 389 to 489 (RPPE…GWGR), 508 to 540 (GGMPRASPGGRSPQVPTSPVPGDPFDQEDETPD), and 553 to 649 (AGRA…GPRL). Residues 19–33 (ASGEQESGSASADGA) are compositionally biased toward low complexity. The span at 34-50 (PSRERRSDRGQADRAKP) shows a compositional bias: basic and acidic residues. The segment covering 124–143 (RRRRKRKDKGPSARRGRRTP) has biased composition (basic residues). 2 stretches are compositionally biased toward basic and acidic residues: residues 212 to 222 (DWPHADTRGRE) and 261 to 288 (TFEDSSRAPRDTGPAKDASDNRAQRGAE). The span at 307-330 (AVGQVPAAAGEGEAGAAAGAGPED) shows a compositional bias: low complexity. Basic and acidic residues predominate over residues 406-416 (WGRRKPDEGRG). Positions 417 to 426 (HGRGSKGRGR) are enriched in basic residues. Positions 427 to 489 (GKADEGRGHE…HQRGYEGWGR (63 aa)) are enriched in basic and acidic residues. A Myosin motor domain is found at 720-1394 (EDMEDLARLR…GWQRLEELRD (675 aa)). 818–825 (GHSGSGKT) provides a ligand contact to ATP. The interval 1273–1295 (LEDLIARLGRSHVYFIQCLTPNP) is actin-binding. In terms of domain architecture, IQ spans 1414–1443 (RQRVLPRMQARMRGFQARKRYLRRRAALGQ). Residues 1551–1702 (RPGQPLAKPL…PTQLEWLAGW (152 aa)) enclose the MyTH4 1 domain. Disordered stretches follow at residues 1802–1833 (PGIQAPSLPPGPPPGPAPTLPSRDHTGEVQRS), 1963–2026 (MQQR…PKSF), and 2040–2262 (QITV…LPED). A compositionally biased stretch (pro residues) spans 1808 to 1820 (SLPPGPPPGPAPT). Low complexity predominate over residues 1963-1980 (MQQRQQQARASEAASQAS). The segment covering 2059-2076 (AQEEEEEEEEEEEQEEQE) has biased composition (acidic residues). The span at 2102-2116 (APKEAEAEPAKETAA) shows a compositional bias: basic and acidic residues. Pro residues predominate over residues 2159–2170 (GPVPVPVQPSRP). Over residues 2176 to 2185 (RKIDPKDEAL) the composition is skewed to basic and acidic residues. 2 stretches are compositionally biased toward pro residues: residues 2199–2217 (MLSPSPGKGPPPAVAPRPK) and 2247–2261 (HTPPPPPAPPLPLPE). Residues 2481–2542 (KDSGYVIALR…PADIVQPAAA (62 aa)) form the SH3 domain. The segment at 2548–2567 (SKEQRSGWHKGQLSNGEPGL) is disordered. The MyTH4 2 domain occupies 2643–2789 (YTKAPIQESL…PPPGEMKAFL (147 aa)). The FERM domain maps to 2795–3096 (RLLLIHLPGG…ASCTEWPSIN (302 aa)).

This sequence belongs to the TRAFAC class myosin-kinesin ATPase superfamily. Myosin family. As to expression, detected in brain, stomach and kidney.

The protein localises to the cytoplasm. The protein is Unconventional myosin-XVB of Homo sapiens (Human).